A 614-amino-acid chain; its full sequence is MPVYRSKTTTSGRNMAGARALWRATGMTDDDFQKPIIAVVNSFTQFVPGHVHLKDMGQLVAREIEAAGGVAKEFNTIAVDDGIAMGHDGMLYSLPSRDLIADSVEYMVNAHCADAMVCISNCDKITPGMLMAAMRINIPVIFVSGGPMEAGKTKLSENKLDLVDAMVIAADPTATDERVAEYERSACPTCGSCSGMFTANSMNCLTEALGLSLPGNGTTLATHSDRRRLFLDAGRRIVDITKRYYENDEANWAPRSIASFEAFENAMTLDIAMGGSTNTILHLLAIAREAGVDFSMEDIDRLSRKVPQLCKVAPNSPKYHVEDVHRAGGIFALLGELDRGGILHNQCHTVHSKTMLEALKSWDIMRSPTPEIIEFYKAGPAGIPTQTAFSQSTRWPSLDGDRAEGCIRSIENAFSLEGGLAVLYGNIAVDGCVVKSAGVDESILVFEGRAHVTESQDEAVKNILDDKVEAGDIVIVRYEGPKGGPGMQEMLYPTSYIKSKGLGKACALLTDGRFSGGTSGLSIGHVSPEAAAGGAIGLVENGDRILIDIPNRSINVLLSDEELAKRRAAMEAKGAAAWKPVEMRPRKVSPALKVYAHFATSADKGAVRDISQID.

Asp81 contacts Mg(2+). Cys122 is a binding site for [2Fe-2S] cluster. Residues Asp123 and Lys124 each coordinate Mg(2+). An N6-carboxylysine modification is found at Lys124. [2Fe-2S] cluster is bound at residue Cys193. Glu489 serves as a coordination point for Mg(2+). Ser515 (proton acceptor) is an active-site residue.

This sequence belongs to the IlvD/Edd family. In terms of assembly, homodimer. [2Fe-2S] cluster serves as cofactor. The cofactor is Mg(2+).

It carries out the reaction (2R)-2,3-dihydroxy-3-methylbutanoate = 3-methyl-2-oxobutanoate + H2O. The catalysed reaction is (2R,3R)-2,3-dihydroxy-3-methylpentanoate = (S)-3-methyl-2-oxopentanoate + H2O. Its pathway is amino-acid biosynthesis; L-isoleucine biosynthesis; L-isoleucine from 2-oxobutanoate: step 3/4. The protein operates within amino-acid biosynthesis; L-valine biosynthesis; L-valine from pyruvate: step 3/4. Functionally, functions in the biosynthesis of branched-chain amino acids. Catalyzes the dehydration of (2R,3R)-2,3-dihydroxy-3-methylpentanoate (2,3-dihydroxy-3-methylvalerate) into 2-oxo-3-methylpentanoate (2-oxo-3-methylvalerate) and of (2R)-2,3-dihydroxy-3-methylbutanoate (2,3-dihydroxyisovalerate) into 2-oxo-3-methylbutanoate (2-oxoisovalerate), the penultimate precursor to L-isoleucine and L-valine, respectively. The sequence is that of Dihydroxy-acid dehydratase from Marinomonas sp. (strain MWYL1).